Reading from the N-terminus, the 902-residue chain is Ephrin type-B receptor 1-B (902 aa).

Residues 1–119 form the Eph LBD domain; the sequence is HRVYVEMRFT…FFKKCPSVVQ (119 aa). Over 1-459 the chain is Extracellular; that stretch reads HRVYVEMRFT…KSELREQLPL (459 aa). Fibronectin type-III domains are found at residues 240–350 and 351–448; these read VPSG…TNQA and APSS…TEED. 3 N-linked (GlcNAc...) asparagine glycosylation sites follow: Asn-252, Asn-344, and Asn-398. Residues 460–480 form a helical membrane-spanning segment; the sequence is IAGSAAAGVVFIVSLVAISIV. The Cytoplasmic segment spans residues 481–902; sequence CSRKRTYSKE…QISQSPTSIA (422 aa). In terms of domain architecture, Protein kinase spans 537 to 800; it reads VKIEEVIGAG…EIVNTLDKMI (264 aa). Residues 543–551 and Lys-569 each bind ATP; that span reads IGAGEFGEV. Asp-662 serves as the catalytic Proton acceptor. The 65-residue stretch at 829–893 folds into the SAM domain; that stretch reads SAFTSVDDWL…LNSIQSMRVQ (65 aa). Residues 900-902 carry the PDZ-binding motif; the sequence is SIA.

Belongs to the protein kinase superfamily. Tyr protein kinase family. Ephrin receptor subfamily. In terms of assembly, heterotetramer upon binding of the ligand. The heterotetramer is composed of an ephrin dimer and a receptor dimer. Oligomerization is probably required to induce biological responses. In terms of processing, phosphorylated. Autophosphorylation is stimulated by ligands. Expressed in the embryo in the brain and spinal cord and in the first and fourth visceral arches. Most abundant in adult brain, with lower levels in eye, heart, ovary, oviduct, lung and pharynx.

Its subcellular location is the cell membrane. It localises to the early endosome membrane. The protein resides in the cell projection. The protein localises to the dendrite. It carries out the reaction L-tyrosyl-[protein] + ATP = O-phospho-L-tyrosyl-[protein] + ADP + H(+). Its function is as follows. Receptor tyrosine kinase which binds promiscuously transmembrane ephrin-B family ligands residing on adjacent cells, leading to contact-dependent bidirectional signaling into neighboring cells. The signaling pathway downstream of the receptor is referred to as forward signaling while the signaling pathway downstream of the ephrin ligand is referred to as reverse signaling. May play a role in axon guidance during nervous system development. May also play an important redundant role with other ephrin-B receptors in development and maturation of dendritic spines and synapse formation. More generally, may play a role in targeted cell migration and adhesion. Upon activation by ephrin-B ligands activates the MAPK/ERK and the JNK signaling cascades to regulate cell migration and adhesion respectively. The protein is Ephrin type-B receptor 1-B (ephb1-b) of Xenopus laevis (African clawed frog).